A 121-amino-acid chain; its full sequence is Ubiquitin-related modifier 1 (121 aa).

Gly121 is modified (1-thioglycine). A Glycyl lysine isopeptide (Gly-Lys) (interchain with K-? in acceptor proteins) cross-link involves residue Gly121.

This sequence belongs to the URM1 family. C-terminal thiocarboxylation occurs in 2 steps, it is first acyl-adenylated (-COAMP) via the hesA/moeB/thiF part of UBA4, then thiocarboxylated (-COSH) via the rhodanese domain of UBA4.

The protein resides in the cytoplasm. It participates in tRNA modification; 5-methoxycarbonylmethyl-2-thiouridine-tRNA biosynthesis. Its function is as follows. Acts as a sulfur carrier required for 2-thiolation of mcm(5)S(2)U at tRNA wobble positions of cytosolic tRNA(Lys), tRNA(Glu) and tRNA(Gln). Serves as sulfur donor in tRNA 2-thiolation reaction by being thiocarboxylated (-COSH) at its C-terminus by the MOCS3 homolog UBA4. The sulfur is then transferred to tRNA to form 2-thiolation of mcm(5)S(2)U. Prior mcm(5) tRNA modification by the elongator complex is required for 2-thiolation. Also acts as a ubiquitin-like protein (UBL) that is covalently conjugated via an isopeptide bond to lysine residues of target proteins such as AHP1. The thiocarboxylated form serves as substrate for conjugation and oxidative stress specifically induces the formation of UBL-protein conjugates. In Ajellomyces capsulatus (strain NAm1 / WU24) (Darling's disease fungus), this protein is Ubiquitin-related modifier 1.